A 254-amino-acid polypeptide reads, in one-letter code: Coiled-coil domain-containing protein 152 (254 aa).

The stretch at 61 to 246 forms a coiled coil; the sequence is SIKEECATLH…LEQRLSVGKD (186 aa).

In terms of tissue distribution, detected in stomach.

The sequence is that of Coiled-coil domain-containing protein 152 (CCDC152) from Homo sapiens (Human).